The primary structure comprises 447 residues: Tubulin beta chain (447 aa).

Residues Gln-11, Glu-69, Ser-138, Gly-142, Thr-143, Gly-144, Asn-204, and Asn-226 each coordinate GTP. Glu-69 is a binding site for Mg(2+). Residues 425 to 447 are disordered; that stretch reads YQEASISEGEEEYDEEAPLEAEE. The span at 432 to 447 shows a compositional bias: acidic residues; it reads EGEEEYDEEAPLEAEE.

The protein belongs to the tubulin family. As to quaternary structure, dimer of alpha and beta chains. A typical microtubule is a hollow water-filled tube with an outer diameter of 25 nm and an inner diameter of 15 nM. Alpha-beta heterodimers associate head-to-tail to form protofilaments running lengthwise along the microtubule wall with the beta-tubulin subunit facing the microtubule plus end conferring a structural polarity. Microtubules usually have 13 protofilaments but different protofilament numbers can be found in some organisms and specialized cells. Mg(2+) serves as cofactor.

It localises to the cytoplasm. The protein resides in the cytoskeleton. Its function is as follows. Tubulin is the major constituent of microtubules, a cylinder consisting of laterally associated linear protofilaments composed of alpha- and beta-tubulin heterodimers. Microtubules grow by the addition of GTP-tubulin dimers to the microtubule end, where a stabilizing cap forms. Below the cap, tubulin dimers are in GDP-bound state, owing to GTPase activity of alpha-tubulin. This is Tubulin beta chain (tubB) from Phaeosphaeria nodorum (strain SN15 / ATCC MYA-4574 / FGSC 10173) (Glume blotch fungus).